Consider the following 229-residue polypeptide: Orotate phosphoribosyltransferase (229 aa).

5-phospho-alpha-D-ribose 1-diphosphate contacts are provided by residues R107, K108, K111, H113, and 133–141; that span reads EDLTTAGGS. T137 serves as a coordination point for orotate.

Belongs to the purine/pyrimidine phosphoribosyltransferase family. PyrE subfamily. As to quaternary structure, homodimer. Mg(2+) is required as a cofactor.

The catalysed reaction is orotidine 5'-phosphate + diphosphate = orotate + 5-phospho-alpha-D-ribose 1-diphosphate. The protein operates within pyrimidine metabolism; UMP biosynthesis via de novo pathway; UMP from orotate: step 1/2. Functionally, catalyzes the transfer of a ribosyl phosphate group from 5-phosphoribose 1-diphosphate to orotate, leading to the formation of orotidine monophosphate (OMP). This Rhizobium etli (strain ATCC 51251 / DSM 11541 / JCM 21823 / NBRC 15573 / CFN 42) protein is Orotate phosphoribosyltransferase.